The sequence spans 449 residues: Bifunctional F420 biosynthesis protein FbiB (449 aa).

A coenzyme F420:L-glutamate ligase region spans residues 1–245 (MSPAGEHGTA…PGTEDLFWLG (245 aa)). GTP contacts are provided by residues 21-24 (LPEF), Ser-51, and Lys-56. A divalent metal cation is bound at residue Asp-110. GTP is bound at residue Asn-113. The a divalent metal cation site is built by Asp-151 and Thr-152. Residues 246–449 (TAEAIELGRR…ADPGDLLIRK (204 aa)) are dehydro-coenzyme F420-0 reductase. Residues 261–265 (RRSVR) and Ala-289 contribute to the FMN site. Asp-321 lines the coenzyme F420-(gamma-Glu)n pocket. FMN contacts are provided by Gly-400 and Arg-437.

It in the N-terminal section; belongs to the CofE family. Requires Mg(2+) as cofactor. It depends on Mn(2+) as a cofactor. K(+) serves as cofactor.

The catalysed reaction is oxidized coenzyme F420-0 + GTP + L-glutamate = oxidized coenzyme F420-1 + GDP + phosphate + H(+). The enzyme catalyses oxidized coenzyme F420-1 + GTP + L-glutamate = oxidized coenzyme F420-2 + GDP + phosphate + H(+). It catalyses the reaction oxidized coenzyme F420-(gamma-L-Glu)(n) + GTP + L-glutamate = oxidized coenzyme F420-(gamma-L-Glu)(n+1) + GDP + phosphate + H(+). It carries out the reaction oxidized coenzyme F420-0 + FMN + H(+) = dehydro coenzyme F420-0 + FMNH2. It participates in cofactor biosynthesis; coenzyme F420 biosynthesis. Functionally, bifunctional enzyme that catalyzes the GTP-dependent successive addition of multiple gamma-linked L-glutamates to the L-lactyl phosphodiester of 7,8-didemethyl-8-hydroxy-5-deazariboflavin (F420-0) to form polyglutamated F420 derivatives, and the FMNH2-dependent reduction of dehydro-F420-0 to form F420-0. This chain is Bifunctional F420 biosynthesis protein FbiB, found in Mycobacterium avium (strain 104).